A 342-amino-acid polypeptide reads, in one-letter code: L-threonine 3-dehydrogenase (342 aa).

C38 serves as a coordination point for Zn(2+). Residues T40 and H43 each act as charge relay system in the active site. Residues H63, E64, C93, C96, C99, and C107 each contribute to the Zn(2+) site. Residues V175, D195, R200, 262 to 264, and 286 to 287 contribute to the NAD(+) site; these read LGI and IY.

The protein belongs to the zinc-containing alcohol dehydrogenase family. Homotetramer. Zn(2+) is required as a cofactor.

The protein localises to the cytoplasm. The catalysed reaction is L-threonine + NAD(+) = (2S)-2-amino-3-oxobutanoate + NADH + H(+). It participates in amino-acid degradation; L-threonine degradation via oxydo-reductase pathway; glycine from L-threonine: step 1/2. In terms of biological role, catalyzes the NAD(+)-dependent oxidation of L-threonine to 2-amino-3-ketobutyrate. In Coxiella burnetii (strain Dugway 5J108-111), this protein is L-threonine 3-dehydrogenase.